The chain runs to 415 residues: Ammonium transporter Rh type A (415 aa).

Topologically, residues 1 to 2 (MR) are cytoplasmic. Residues 3-23 (FIFPTIAVLLEASMIVLFGFF) traverse the membrane as a helical segment. At 24–51 (VKYETEQNAIQQPNSTNSTKVDRSLELY) the chain is on the extracellular side. 2 N-linked (GlcNAc...) asparagine glycosylation sites follow: N37 and N40. Residues 52–72 (PLFQDVHVMIFVGFGFLMTFL) form a helical membrane-spanning segment. Residues 73-76 (KKYG) are Cytoplasmic-facing. Residues 77–97 (FSSVGINLLIAALGLQWGTFV) traverse the membrane as a helical segment. Over 98–115 (QGMVHRHGQTIYIGIKNM) the chain is Extracellular. The chain crosses the membrane as a helical span at residues 116-136 (INADFSTATVLISFGAVLGKI). Topologically, residues 137–142 (SPTQML) are cytoplasmic. A helical transmembrane segment spans residues 143-163 (IMTIIEITVFAGNEYVVGEIF). Residues 164–167 (QASD) lie on the Extracellular side of the membrane. Residues 168–188 (IGASMTIHAFGAYFGLAVAGV) form a helical membrane-spanning segment. At 189–208 (LYRTGLRKGHEKEESEYHSD) the chain is on the cytoplasmic side. A helical transmembrane segment spans residues 209–229 (LFAMIGTLFLWMFWPSFNSAI). The Extracellular segment spans residues 230-236 (AETAEEQ). A helical membrane pass occupies residues 237 to 257 (YLAIINTYLSLVACVLTAYAM). The Cytoplasmic portion of the chain corresponds to 258–268 (SSLVGHRGKLD). Residues 269–287 (MVHIQNATLAGGVAVGTCA) traverse the membrane as a helical segment. At 288 to 290 (DMK) the chain is on the extracellular side. A helical membrane pass occupies residues 291–311 (IHPYGSLIIGSIAGMVSVLGF). Residues 312–332 (RFLTPCLTAKLRIHDTCGVHN) lie on the Cytoplasmic side of the membrane. The helical transmembrane segment at 333-353 (LHGLPGVVGGLSSIVAILLGV) threads the bilayer. Over 354–363 (STASSMTMQA) the chain is Extracellular. Residues 364 to 384 (AALGSSIGSAIAGGLITGLIL) traverse the membrane as a helical segment. Residues 385 to 415 (RFIVRGQPSKDNFFDDSVYWEVPKEKELDNV) are Cytoplasmic-facing.

It belongs to the ammonium transporter (TC 2.A.49) family. Rh subfamily. Homodimer. Heterotrimer; a RHCE monomer interacts with a RHAG homodimer. Component of the ankyrin-1 complex in the erythrocyte, composed of ANK1, RHCE, RHAG, SLC4A1, EPB42, GYPA, GYPB and AQP1. Interacts with GYPB (via the N-terminal); this interaction bridges the (RHAG)2(RHCE) heterotrimer with the SLC4A1 Band 3 I dimer complexed with GYPA. In terms of processing, glycosylated.

Its subcellular location is the membrane. The catalysed reaction is methylamine(out) = methylamine(in). It catalyses the reaction NH4(+)(in) = NH4(+)(out). It carries out the reaction CO2(out) = CO2(in). Component of the ankyrin-1 complex, a multiprotein complex involved in the stability and shape of the erythrocyte membrane. Heterotrimer with RHCE (RHAG)2(RHCE), that transports ammonium and its related derivative methylammonium, in both neutral and ionic forms, across the erythrocyte membrane. The transport of NH4(+) is electrogenic and masks the NH3 transport. Also, may act as a CO2 channel. Moreover in erythrocyte, regulates RHD membrane expression and is associated with rhesus blood group antigen expression. The protein is Ammonium transporter Rh type A of Canis lupus familiaris (Dog).